A 175-amino-acid polypeptide reads, in one-letter code: Dual-action ribosomal maturation protein DarP (175 aa).

This sequence belongs to the DarP family.

It localises to the cytoplasm. Functionally, member of a network of 50S ribosomal subunit biogenesis factors which assembles along the 30S-50S interface, preventing incorrect 23S rRNA structures from forming. Promotes peptidyl transferase center (PTC) maturation. The polypeptide is Dual-action ribosomal maturation protein DarP (Vibrio parahaemolyticus serotype O3:K6 (strain RIMD 2210633)).